Reading from the N-terminus, the 176-residue chain is Putative L,D-transpeptidase YqjB (176 aa).

Positions 1–25 (MRFFLCSIFMMISPIWPLGENPLPG) are cleaved as a signal peptide. The L,D-TPase catalytic domain occupies 27-151 (PYVIVNKRTN…IPVGTRVLIT (125 aa)). Histidine 111 serves as the catalytic Proton donor/acceptor. Cysteine 127 acts as the Nucleophile in catalysis.

Belongs to the YkuD family.

It functions in the pathway cell wall biogenesis; peptidoglycan biosynthesis. This chain is Putative L,D-transpeptidase YqjB (yqjB), found in Bacillus subtilis (strain 168).